Consider the following 1038-residue polypeptide: Rap guanine nucleotide exchange factor 1 (1038 aa).

An a nucleoside 3',5'-cyclic phosphate-binding site is contributed by 10 to 140 (RLSPLHTFSD…DILTDETPSD (131 aa)). In terms of domain architecture, DEP spans 234 to 316 (TDNHQVIRDI…KTNSYYRWVQ (83 aa)). 375–492 (ALSHLSTMVK…VRLKDYGEDV (118 aa)) contributes to the a nucleoside 3',5'-cyclic phosphate binding site. An N-terminal Ras-GEF domain is found at 516–654 (CGYSVMAGKA…DILTRIGSIR (139 aa)). The region spanning 795–1028 (DSQELAHQLF…MQLSYEIEPK (234 aa)) is the Ras-GEF domain.

In terms of assembly, interacts (via C-terminus) with drn-1. As to expression, expressed specifically in neurons including the nerve ring, ventral and dorsal nerve cord motor neurons and tail ganglia.

In terms of biological role, guanine nucleotide-releasing protein. Together with GTPase drn-1, may regulate acetylcholine release at the neuromuscular junctions probably downstream of G-protein gsa-1 and adenylate cyclase acy-1. The polypeptide is Rap guanine nucleotide exchange factor 1 (epac-1) (Caenorhabditis elegans).